Reading from the N-terminus, the 193-residue chain is 3-isopropylmalate dehydratase small subunit (193 aa).

Belongs to the LeuD family. LeuD type 1 subfamily. Heterodimer of LeuC and LeuD.

It catalyses the reaction (2R,3S)-3-isopropylmalate = (2S)-2-isopropylmalate. It participates in amino-acid biosynthesis; L-leucine biosynthesis; L-leucine from 3-methyl-2-oxobutanoate: step 2/4. Its function is as follows. Catalyzes the isomerization between 2-isopropylmalate and 3-isopropylmalate, via the formation of 2-isopropylmaleate. The polypeptide is 3-isopropylmalate dehydratase small subunit (Listeria innocua serovar 6a (strain ATCC BAA-680 / CLIP 11262)).